Here is a 275-residue protein sequence, read N- to C-terminus: MELWFTEKQTKHFGITARINRTLHTEQTEFQKLDMVETEEFGNMLILDGMVMTTEKDEFVYHEMVAHVPLFTHPNPENVLVVGGGDGGVIREVLKHPSVKKATLVEIDGKVIEYSKKYLPSIAGALDHERVEVKVGDGFLHIAESENEYDVIMVDSTEPVGPAVNLFTKGFYAGISKALKEDGIFVAQTDNPWFTPELITNVVKDVKEIFPITRLYTANIPTYPSGLWTFTIGSKKYDPLEVSEDRFHDIETKYYTKELHKASFALPKFVGDLIK.

One can recognise a PABS domain in the interval 2 to 235; sequence ELWFTEKQTK…GLWTFTIGSK (234 aa). Gln-31 lines the S-methyl-5'-thioadenosine pocket. Spermidine contacts are provided by His-62 and Asp-86. S-methyl-5'-thioadenosine contacts are provided by residues Glu-106 and 137 to 138; that span reads DG. Asp-155 (proton acceptor) is an active-site residue. 155–158 contacts spermidine; that stretch reads DSTE. Pro-162 is an S-methyl-5'-thioadenosine binding site.

It belongs to the spermidine/spermine synthase family. In terms of assembly, homodimer or homotetramer.

The protein resides in the cytoplasm. It catalyses the reaction S-adenosyl 3-(methylsulfanyl)propylamine + putrescine = S-methyl-5'-thioadenosine + spermidine + H(+). Its pathway is amine and polyamine biosynthesis; spermidine biosynthesis; spermidine from putrescine: step 1/1. Its function is as follows. Catalyzes the irreversible transfer of a propylamine group from the amino donor S-adenosylmethioninamine (decarboxy-AdoMet) to putrescine (1,4-diaminobutane) to yield spermidine. In Bacillus cytotoxicus (strain DSM 22905 / CIP 110041 / 391-98 / NVH 391-98), this protein is Polyamine aminopropyltransferase.